A 183-amino-acid chain; its full sequence is Transmembrane protein 252 (183 aa).

Transmembrane regions (helical) follow at residues 8–28 (ILCA…GFFI) and 39–59 (LVVA…GIFW).

It is found in the membrane. In Mus musculus (Mouse), this protein is Transmembrane protein 252 (Tmem252).